We begin with the raw amino-acid sequence, 248 residues long: Tyrosine recombinase XerD-like (248 aa).

Residues 1–72 enclose the Core-binding (CB) domain; sequence MKSYIEPFIA…TANQFLYYLY (72 aa). The Tyr recombinase domain occupies 85–248; it reads DTMKVMRTEK…PVTLEKYYKS (164 aa). Active-site residues include Lys149 and Arg213. Residue Tyr245 is the O-(3'-phospho-DNA)-tyrosine intermediate of the active site.

It belongs to the 'phage' integrase family. XerD-like subfamily.

It is found in the cytoplasm. In terms of biological role, putative tyrosine recombinase. Not involved in the cutting and rejoining of the recombining DNA molecules on dif(SL) site. The chain is Tyrosine recombinase XerD-like from Streptococcus pyogenes serotype M18 (strain MGAS8232).